We begin with the raw amino-acid sequence, 210 residues long: Redox-sensing transcriptional repressor Rex (210 aa).

Positions 17 to 56 (KYHRYLGNLMRNDVDRISSKELSEKIGFTASQIRQDLNCF) form a DNA-binding region, H-T-H motif. 91–96 (GAGNIG) contacts NAD(+).

Belongs to the transcriptional regulatory Rex family. In terms of assembly, homodimer.

Its subcellular location is the cytoplasm. Modulates transcription in response to changes in cellular NADH/NAD(+) redox state. In Clostridium kluyveri (strain ATCC 8527 / DSM 555 / NBRC 12016 / NCIMB 10680 / K1), this protein is Redox-sensing transcriptional repressor Rex.